The following is a 328-amino-acid chain: Malate dehydrogenase (328 aa).

12 to 18 (GAAGQIA) contributes to the NAD(+) binding site. Substrate is bound by residues arginine 93 and arginine 99. Residues asparagine 106, glutamine 113, and 130–132 (VGN) contribute to the NAD(+) site. Residues asparagine 132 and arginine 163 each contribute to the substrate site. Histidine 188 functions as the Proton acceptor in the catalytic mechanism.

This sequence belongs to the LDH/MDH superfamily. MDH type 2 family.

The catalysed reaction is (S)-malate + NAD(+) = oxaloacetate + NADH + H(+). Its function is as follows. Catalyzes the reversible oxidation of malate to oxaloacetate. This is Malate dehydrogenase from Burkholderia ambifaria (strain ATCC BAA-244 / DSM 16087 / CCUG 44356 / LMG 19182 / AMMD) (Burkholderia cepacia (strain AMMD)).